A 345-amino-acid polypeptide reads, in one-letter code: D-erythrose-4-phosphate dehydrogenase (345 aa).

Position 11–12 (11–12) interacts with NAD(+); the sequence is RI. Substrate contacts are provided by residues 158–160, Arg204, 217–218, and Arg240; these read SCT and TK. Cys159 serves as the catalytic Nucleophile. Asn322 lines the NAD(+) pocket.

Belongs to the glyceraldehyde-3-phosphate dehydrogenase family. Epd subfamily. Homotetramer.

It localises to the cytoplasm. It catalyses the reaction D-erythrose 4-phosphate + NAD(+) + H2O = 4-phospho-D-erythronate + NADH + 2 H(+). Its pathway is cofactor biosynthesis; pyridoxine 5'-phosphate biosynthesis; pyridoxine 5'-phosphate from D-erythrose 4-phosphate: step 1/5. Functionally, catalyzes the NAD-dependent conversion of D-erythrose 4-phosphate to 4-phosphoerythronate. The sequence is that of D-erythrose-4-phosphate dehydrogenase from Vibrio campbellii (strain ATCC BAA-1116).